We begin with the raw amino-acid sequence, 141 residues long: Large ribosomal subunit protein uL11 (141 aa).

This sequence belongs to the universal ribosomal protein uL11 family. As to quaternary structure, part of the ribosomal stalk of the 50S ribosomal subunit. Interacts with L10 and the large rRNA to form the base of the stalk. L10 forms an elongated spine to which L12 dimers bind in a sequential fashion forming a multimeric L10(L12)X complex. Post-translationally, one or more lysine residues are methylated.

Its function is as follows. Forms part of the ribosomal stalk which helps the ribosome interact with GTP-bound translation factors. This is Large ribosomal subunit protein uL11 from Alkaliphilus oremlandii (strain OhILAs) (Clostridium oremlandii (strain OhILAs)).